The chain runs to 594 residues: Elongation factor 4 (594 aa).

A tr-type G domain is found at 2-184 (KNIRNFSIIA…TIVAKVPAPE (183 aa)). GTP is bound by residues 14 to 19 (DHGKST) and 131 to 134 (NKID).

The protein belongs to the TRAFAC class translation factor GTPase superfamily. Classic translation factor GTPase family. LepA subfamily.

The protein resides in the cell inner membrane. It carries out the reaction GTP + H2O = GDP + phosphate + H(+). Functionally, required for accurate and efficient protein synthesis under certain stress conditions. May act as a fidelity factor of the translation reaction, by catalyzing a one-codon backward translocation of tRNAs on improperly translocated ribosomes. Back-translocation proceeds from a post-translocation (POST) complex to a pre-translocation (PRE) complex, thus giving elongation factor G a second chance to translocate the tRNAs correctly. Binds to ribosomes in a GTP-dependent manner. The chain is Elongation factor 4 from Francisella tularensis subsp. novicida (strain U112).